Reading from the N-terminus, the 137-residue chain is Small ribosomal subunit protein uS12 (137 aa).

The segment at 1-23 (MPTINQLVRKPRKSNATKSKSPA) is disordered. Asp102 is subject to 3-methylthioaspartic acid.

It belongs to the universal ribosomal protein uS12 family. In terms of assembly, part of the 30S ribosomal subunit. Contacts proteins S8 and S17. May interact with IF1 in the 30S initiation complex.

With S4 and S5 plays an important role in translational accuracy. In terms of biological role, interacts with and stabilizes bases of the 16S rRNA that are involved in tRNA selection in the A site and with the mRNA backbone. Located at the interface of the 30S and 50S subunits, it traverses the body of the 30S subunit contacting proteins on the other side and probably holding the rRNA structure together. The combined cluster of proteins S8, S12 and S17 appears to hold together the shoulder and platform of the 30S subunit. The polypeptide is Small ribosomal subunit protein uS12 (Leuconostoc citreum (strain KM20)).